Reading from the N-terminus, the 354-residue chain is MQLIKCLVIIQLSLLLVEESFAGRDFYKILNVKKNANTNEVKKAYRRLAKELHPDKNKDDPDASTKFQDLGAAYEVLSNPDKRKTYDRCGEECLKKEGMMDHGGDPFSSFFGDFGFHFGGDGQQQDAPRGADIVMDLYVSLEELYSGNFVEIVRNKPVTKPASGTRKCNCRQEMVTRNLGPGRFQMIQQTVCDECPNVKLVNEERTLEIEVEQGMVDGQETRFVAEGEPHIDGEPGDLIVRVQQMPHPRFLRKNDDLYTNVTISLQDALVGFSMEIKHLDGHLVPVTREKVTWPGARIRKKGEGMPNFENNNLTGNLYITFDVEFPKKDLTEEDKEALKKILDQSSINRIYNGL.

An N-terminal signal peptide occupies residues 1 to 22 (MQLIKCLVIIQLSLLLVEESFA). The J domain maps to 25-90 (DFYKILNVKK…DKRKTYDRCG (66 aa)). N-linked (GlcNAc...) asparagine glycosylation is found at Asn-260 and Asn-312.

As to expression, in the testes, detected at low levels in somatic hub cells, cyst stem cells and the apical tip (at protein level). Levels in the testes decrease with age (at protein level). Expressed at low levels in hub cells, cyst stem cells and germline stem cells, and at high levels in spermatocytes and cyst cells.

It is found in the nucleus. The protein resides in the cell membrane. The protein localises to the secreted. Its function is as follows. Maintains stem cell niche architecture in the testes. Activates an extracellular integrin beta-PS pathway which regulates DE-cadherin (shg) levels in somatic hub cells, and is essential for maintaining the number of germline stem cells and the structure and localization of hub cells. The chain is DnaJ homolog shv from Drosophila melanogaster (Fruit fly).